Consider the following 118-residue polypeptide: Holo-[acyl-carrier-protein] synthase (118 aa).

2 residues coordinate Mg(2+): Asp8 and Glu58.

This sequence belongs to the P-Pant transferase superfamily. AcpS family. Requires Mg(2+) as cofactor.

Its subcellular location is the cytoplasm. The enzyme catalyses apo-[ACP] + CoA = holo-[ACP] + adenosine 3',5'-bisphosphate + H(+). Functionally, transfers the 4'-phosphopantetheine moiety from coenzyme A to a Ser of acyl-carrier-protein. This is Holo-[acyl-carrier-protein] synthase from Listeria innocua serovar 6a (strain ATCC BAA-680 / CLIP 11262).